A 1296-amino-acid chain; its full sequence is Clustered mitochondria protein homolog (1296 aa).

The interval 1-31 is disordered; sequence MTLMNGDGAHEHQAEAEPKQNGHEMGDQTEE. The span at 8-26 shows a compositional bias: basic and acidic residues; sequence GAHEHQAEAEPKQNGHEMG. In terms of domain architecture, Clu spans 333–575; that stretch reads RAEDAYTSRL…RTFPPDLNFL (243 aa). A coiled-coil region spans residues 662-689; the sequence is LDGEAQLKQLEETMAAHKETVDTRSKEV. TPR repeat units lie at residues 970-1003, 1012-1045, 1096-1129, and 1138-1171; these read AFHFFQSGQAKVQQGYLKEGCELINEALNLFNNV, CACLRLLARLNYIMGDYSEALSNQQKAVLMSERI, ALLDSNIGLVLHGVMEYDLSLRFLENALTINSKY, and ALSHHLVARVYETKGEFRSALQHEKDGYTIYKNQ. A coiled-coil region spans residues 1242 to 1274; that stretch reads QKDLEHLKAEVQRRQQLQEAIKGAENHEAKTKE. Positions 1261-1296 are disordered; sequence AIKGAENHEAKTKEPEMSETSDSNINAASVAPESSD. Basic and acidic residues predominate over residues 1263-1276; sequence KGAENHEAKTKEPE. Over residues 1278-1296 the composition is skewed to polar residues; sequence SETSDSNINAASVAPESSD.

Belongs to the CLU family.

It localises to the cytoplasm. Its subcellular location is the cytoplasmic granule. In terms of biological role, mRNA-binding protein involved in proper cytoplasmic distribution of mitochondria. Specifically binds mRNAs of nuclear-encoded mitochondrial proteins in the cytoplasm and regulates transport or translation of these transcripts close to mitochondria, playing a role in mitochondrial biogenesis. In Xenopus tropicalis (Western clawed frog), this protein is Clustered mitochondria protein homolog.